A 402-amino-acid polypeptide reads, in one-letter code: Multidrug resistance protein MdtH (402 aa).

The Cytoplasmic portion of the chain corresponds to 1–12 (MSRVSQARNLGK). A helical transmembrane segment spans residues 13-33 (YFLLIDNMLVVLGFFVVFPLI). The Periplasmic portion of the chain corresponds to 34 to 98 (SIRFVDQMGW…GFATMGIAHE (65 aa)). A helical membrane pass occupies residues 99 to 116 (PWLLWFSCLLSGLGGTLF). Topologically, residues 117 to 138 (DPPRSALVVKLIRPQQRCRFFS) are cytoplasmic. Residues 139-159 (LLMMQDSAGAVIGALLGSWLL) traverse the membrane as a helical segment. Residues 160–164 (QYDFR) lie on the Periplasmic side of the membrane. Residues 165 to 185 (LVCATGAVLFVLCAAFNAWLL) form a helical membrane-spanning segment. Residues 186–213 (PAWKLSTVRTPVREGMTRVMRDKRFVTY) are Cytoplasmic-facing. Residues 214 to 234 (VLTLAGYYMLAVQVMLMLPIM) traverse the membrane as a helical segment. Residues 235-243 (VNDVAGAPS) are Periplasmic-facing. A helical membrane pass occupies residues 244 to 264 (AVKWMYAIEACLSLTLLYPIA). The Cytoplasmic portion of the chain corresponds to 265–276 (RWSEKHFRLEHR). A helical transmembrane segment spans residues 277–297 (LMAGLLIMSLSMMPVGMVSGL). Over 298 to 299 (QQ) the chain is Periplasmic. The helical transmembrane segment at 300–320 (LFTLICLFYIGSIIAEPARET) threads the bilayer. Over 321–339 (LSALLADARARGSYMGFSR) the chain is Cytoplasmic. A helical membrane pass occupies residues 340–360 (LGLAIGGAIGYIGGGWLFDLG). Over 361-367 (KSAHQPE) the chain is Periplasmic. The chain crosses the membrane as a helical span at residues 368–388 (LPWMMLGIIGIFTFLALGWQF). Topologically, residues 389–402 (SQKRATRRLLERDA) are cytoplasmic.

Belongs to the major facilitator superfamily. DHA1 family. MdtH (TC 2.A.1.2.21) subfamily.

Its subcellular location is the cell inner membrane. The sequence is that of Multidrug resistance protein MdtH from Shigella sonnei (strain Ss046).